The sequence spans 124 residues: MRQAGRAALLAALLLLVQLCPGSSQRSPEAAGVQDPSLRWSPGARNQGGGARALLLLLAERFPRRAGPGRLGLGTAGERPRRDNPSLSIDLTFHLLRTLLELARTQSQRERAEQNRIIFDSVGK.

The signal sequence occupies residues 1–25 (MRQAGRAALLAALLLLVQLCPGSSQ). Residues 23–46 (SSQRSPEAAGVQDPSLRWSPGARN) are disordered. The propeptide occupies 26-82 (RSPEAAGVQDPSLRWSPGARNQGGGARALLLLLAERFPRRAGPGRLGLGTAGERPRR). V122 bears the Valine amide mark.

Belongs to the sauvagine/corticotropin-releasing factor/urotensin I family. In terms of assembly, interacts with CRHR1 and CRHR2 (via their N-terminal extracellular domain). Keratinocytes in epidermis and the outer and inner root sheaths of hair follicles, epithelium of sebaceous and sweat glands, erector pili muscle, cutaneous blood vessel walls, cutaneous nerves and dermal mononuclear cells. Detected in plasma cells in the lamia propria in colon mucosa (at protein level). Expressed in pituitary and adrenal glands. Detected in plasma cells in the lamia propria in colon mucosa.

It is found in the secreted. Acts in vitro to stimulate the secretion of adrenocorticotropic hormone (ACTH). Binds with high affinity to CRF receptor types 1, 2-alpha, and 2-beta. Plays a role in the establishment of normal hearing thresholds. Reduces food intake and regulates ghrelin levels in gastric body and plasma. The chain is Urocortin (UCN) from Homo sapiens (Human).